A 77-amino-acid chain; its full sequence is Dermatoxin-DA1 (77 aa).

An N-terminal signal peptide occupies residues 1-22 (MAFLKKSLFLVLFLGLVPLFLC). Positions 23–42 (ENEKREGENEKEENDDQSEE) are excised as a propeptide. Lysine 76 carries the lysine amide modification.

The protein belongs to the frog skin active peptide (FSAP) family. Dermatoxin subfamily. In terms of tissue distribution, expressed by the skin glands.

The protein resides in the secreted. Functionally, possesses a potent antimicrobial activity against Gram-positive and Gram-negative bacteria. Probably acts by disturbing membrane functions with its amphipathic structure. The polypeptide is Dermatoxin-DA1 (Agalychnis dacnicolor (Giant Mexican leaf frog)).